A 320-amino-acid polypeptide reads, in one-letter code: MRIAVDAMGGDYAPLEIVAGAVKWVAEEEERQIFLVGQEELLKQELKSYSYDPSRLIVVNASEVITMEESPATAIRRKKDASIVVASRMVKEKKADAIISCGSTGAQMAAAIFILGRMEGIERPPIVASIPNMTGAYTLLIDVGANVDCKPRQLLQFALLGKTYASIIYGVEQPRVALLNNGEEESKGNTVTMETYALLRQQSGINFTGNVEGRDIFTGKSDVIVCDGFTGNVLLKTMEGMALFIAQGILGAGGPMPAFFQRLDYTQTGGAPLLGINGLSIVCHGSSKREAVYNGLRIAEDCYNKNIIEMQQLELSKISG.

Belongs to the PlsX family. As to quaternary structure, homodimer. Probably interacts with PlsY.

The protein resides in the cytoplasm. It carries out the reaction a fatty acyl-[ACP] + phosphate = an acyl phosphate + holo-[ACP]. It functions in the pathway lipid metabolism; phospholipid metabolism. In terms of biological role, catalyzes the reversible formation of acyl-phosphate (acyl-PO(4)) from acyl-[acyl-carrier-protein] (acyl-ACP). This enzyme utilizes acyl-ACP as fatty acyl donor, but not acyl-CoA. In Syntrophomonas wolfei subsp. wolfei (strain DSM 2245B / Goettingen), this protein is Phosphate acyltransferase.